We begin with the raw amino-acid sequence, 521 residues long: NADH-quinone oxidoreductase subunit N (521 aa).

14 helical membrane-spanning segments follow: residues 15–35 (LAPELILAAMFLILIVTDLIL), 43–63 (IIGWLSLAGLLLSLAAVIWRM), 98–118 (LLKIIFLIGTSLVVLLGLGST), 128–148 (AEFYYLLLPAAAGAMIMASSG), 150–170 (LVTLYIGLELLSITTYVLVGL), 185–205 (VVTGGIASAFVLFGMSYLYGV), 227–247 (ALVYVGFFFLIAGFGIKIAAA), 261–281 (PTPVSAFLAVIAKGAALAAVF), 303–323 (VFFALLVIAAAAMIAGTVSAL), 331–351 (LLALSGVANAGYLLVPIAISV), 363–383 (VFYLVAYLLMNVGAFAVVTVI), 406–426 (AAAMLIFILSFSGLPVTAGFF), 442–462 (WLVAIMVVSTVISYYFYFGII), and 485–505 (TVIWICAAATVALGVLPGPLM).

This sequence belongs to the complex I subunit 2 family. NDH-1 is composed of 14 different subunits. Subunits NuoA, H, J, K, L, M, N constitute the membrane sector of the complex.

The protein resides in the cell membrane. It carries out the reaction a quinone + NADH + 5 H(+)(in) = a quinol + NAD(+) + 4 H(+)(out). Functionally, NDH-1 shuttles electrons from NADH, via FMN and iron-sulfur (Fe-S) centers, to quinones in the respiratory chain. The immediate electron acceptor for the enzyme in this species is believed to be a menaquinone. Couples the redox reaction to proton translocation (for every two electrons transferred, four hydrogen ions are translocated across the cytoplasmic membrane), and thus conserves the redox energy in a proton gradient. The protein is NADH-quinone oxidoreductase subunit N of Paenibacillus sp. (strain JDR-2).